A 391-amino-acid chain; its full sequence is Chaperone protein DnaJ (391 aa).

The 66-residue stretch at 2 to 67 (DYYDVLGVSK…QKRESYDRYG (66 aa)) folds into the J domain. The CR-type zinc finger occupies 148-226 (GVKKELLVSG…CRGQGRIKDK (79 aa)). 8 residues coordinate Zn(2+): Cys-161, Cys-164, Cys-178, Cys-181, Cys-200, Cys-203, Cys-214, and Cys-217. CXXCXGXG motif repeat units lie at residues 161-168 (CETCSGSG), 178-185 (CDRCKGSG), 200-207 (CPECGGEG), and 214-221 (CSSCRGQG).

This sequence belongs to the DnaJ family. Homodimer. Requires Zn(2+) as cofactor.

It is found in the cytoplasm. Functionally, participates actively in the response to hyperosmotic and heat shock by preventing the aggregation of stress-denatured proteins and by disaggregating proteins, also in an autonomous, DnaK-independent fashion. Unfolded proteins bind initially to DnaJ; upon interaction with the DnaJ-bound protein, DnaK hydrolyzes its bound ATP, resulting in the formation of a stable complex. GrpE releases ADP from DnaK; ATP binding to DnaK triggers the release of the substrate protein, thus completing the reaction cycle. Several rounds of ATP-dependent interactions between DnaJ, DnaK and GrpE are required for fully efficient folding. Also involved, together with DnaK and GrpE, in the DNA replication of plasmids through activation of initiation proteins. This is Chaperone protein DnaJ from Chlamydia abortus (strain DSM 27085 / S26/3) (Chlamydophila abortus).